Consider the following 118-residue polypeptide: Elongin-B (118 aa).

An N-acetylmethionine modification is found at Met1. One can recognise a Ubiquitin-like domain in the interval 1 to 66; sequence MDVFLMIRRH…LGECGFTSQT (66 aa). Thr84 is modified (phosphothreonine). The interval 92–118 is disordered; it reads PFSSPPELPDVMKPQDSGSSANEQAVQ. Residues 107-118 are compositionally biased toward polar residues; the sequence is DSGSSANEQAVQ. 2 positions are modified to phosphoserine: Ser108 and Ser111.

It belongs to the Elongin B family. As to quaternary structure, heterotrimer of an A (ELOA, ELOA2 or ELOA3P), ELOB and ELOC subunit. The elongin BC complex interacts with EPOP; leading to recruit the elongin BC complex to Polycomb group (PcG) target genes, thereby restricting excessive activity of the PRC2/EED-EZH2 complex. Component of multiple cullin-RING E3 ubiquitin-protein ligase complexes composed of Elongin BC (ELOB and ELOC), a cullin (either CUL2 or CUL5), a catalytic subunit (either RBX1 or RNF7/RBX2), as well as a substrate adapter protein that can be either ASB2, ASB9, ASB11, KLHDC2, KLHDC3, KLHDC10, APPBP2, FEM1A, FEM1B, FEM1C, LRR1, PCMTD1, SOCS1, SOCS2, SOCS5, SPSB1, SPSB3, ELOA, VHL, WSB1 or RAB40C. As part of the Elongin BC E3 ubiquitin ligase complex; interacts with NRBP1. May also interact with DCUN1D1, DCUN1D2, DCUN1D3 and DCUN1D5. May form oligomers as a KLHDC2/KLHDC3-ELOB-ELOC complex; this interaction is autoinhibitory for the E3 ligase complex as the substrate-binding site of KLHDC2/KLHDC3 is blocked in the oligomer. In terms of assembly, (Microbial infection) Following infection by HIV-1 virus, component of a cullin-5-RING E3 ubiquitin-protein ligase complex (ECS complex) hijacked by the HIV-1 Vif protein. (Microbial infection) Substrate adapter protein can be a viral protein such as HIV Vif. As to quaternary structure, (Microbial infection) Interacts with molluscum contagiosum virus MC132. In terms of assembly, (Microbial infection) Interacts with herpes virus 8 virus protein LANA1.

The protein localises to the nucleus. It participates in protein modification; protein ubiquitination. Functionally, SIII, also known as elongin, is a general transcription elongation factor that increases the RNA polymerase II transcription elongation past template-encoded arresting sites. Subunit A is transcriptionally active and its transcription activity is strongly enhanced by binding to the dimeric complex of the SIII regulatory subunits B and C (elongin BC complex). In embryonic stem cells, the elongin BC complex is recruited by EPOP to Polycomb group (PcG) target genes in order generate genomic region that display both active and repressive chromatin properties, an important feature of pluripotent stem cells. Its function is as follows. Core component of multiple cullin-2 and cullin-5-RING E3 ubiquitin-protein ligase complexes (ECS complexes), which mediate the ubiquitination of target proteins. By binding to BC-box motifs it seems to link target recruitment subunits, like VHL and members of the SOCS box family, to Cullin/RBX1 modules that activate E2 ubiquitination enzymes. Component the von Hippel-Lindau ubiquitination complex CBC(VHL). A number of ECS complexes (containing either KLHDC2, KLHDC3, KLHDC10, APPBP2, FEM1A, FEM1B or FEM1C as substrate-recognition component) are part of the DesCEND (destruction via C-end degrons) pathway, which recognizes a C-degron located at the extreme C terminus of target proteins, leading to their ubiquitination and degradation. The ECS(ASB9) complex mediates ubiquitination and degradation of CKB. As part of a multisubunit ubiquitin ligase complex, polyubiquitinates monoubiquitinated POLR2A. ECS(LRR1) ubiquitinates MCM7 and promotes CMG replisome disassembly by VCP and chromatin extraction during S-phase. As part of the ECS(RAB40C) complex, mediates ANKRD28 ubiquitination and degradation, thereby inhibiting protein phosphatase 6 (PP6) complex activity and focal adhesion assembly during cell migration. In terms of biological role, (Microbial infection) Following infection by HIV-1 virus, component of a cullin-5-RING E3 ubiquitin-protein ligase complex (ECS complex) hijacked by the HIV-1 Vif protein, which catalyzes ubiquitination and degradation of APOBEC3F and APOBEC3G. The complex can also ubiquitinate APOBEC3H to some extent. The sequence is that of Elongin-B from Homo sapiens (Human).